A 508-amino-acid chain; its full sequence is Cytochrome P450 monooxygenase dmxR5 (508 aa).

The chain crosses the membrane as a helical span at residues 24-44 (LTLGLGAILVVLMSFLAFLSY). N-linked (GlcNAc...) asparagine glycans are attached at residues asparagine 387 and asparagine 405. Cysteine 451 is a binding site for heme. The N-linked (GlcNAc...) asparagine glycan is linked to asparagine 462. Positions 481-508 (EHKKSTQESGHGVPLPSKLSKFSPREEN) are disordered.

It belongs to the cytochrome P450 family. Heme is required as a cofactor.

It localises to the membrane. Its pathway is secondary metabolite biosynthesis. Cytochrome P450 monooxygenase; part of the gene cluster that mediates the biosynthesis of the dimeric xanthones cryptosporioptides. The pathway begins with the synthesis of atrochrysone thioester by the polyketide synthase dmx-nrPKS. The atrochrysone carboxyl ACP thioesterase dmxR1 then breaks the thioester bond and releases the atrochrysone carboxylic acid from dmx-nrPKS. Atrochrysone carboxylic acid is decarboxylated by the decarboxylase dmxR15, and oxidized by the anthrone oxygenase dmxR16 to yield emodin. Emodin is then reduced to emodin hydroquinone by the oxidoreductase dmxR7. A-ring reduction by the short chain dehydrogenase dmxR18, dehydration by the scytalone dehydratase-like protein dmxR17 and probable spontaneous re-oxidation, results in overall deoxygenation to chrysophanol. Baeyer-Villiger oxidation by the Baeyer-Villiger monooxygenase (BVMO) dmxR6 then yields monodictylactone in equilibrium with monodictyphenone. In the case of the cryptosporioptides biosynthesis, monodictylactone is reduced at C-12 to an alcohol (by the short chain dehydrogenases dmxR12 or dmxR8) and hydroxylated at C-5 by dmxR9, yielding the electron-rich aromatic which could eliminate H(2)O to form the ortho-quinonemethide, followed by tautomerisation to paraquinone and complete the formal reduction to produce the 10-methylgroup. Conjugate addition of C-4a-OH to the resulting paraquinone by the monooxygenase dmxR10 then gives cyclohexadienone, which is then reduced at C-5 by the short chain dehydrogenase dmxR3 to give the dihydroxanthone. The 6,7-epoxide in the cryptosporioptides could be introduced by the cytochrome P450 monooxygenase dmxL3. The highly reducing PKS dmxL2 manufactures butyrate, which is further carboxylated by dmxL1 to form ethylmalonate. It is not yet clear whether the carboxylation occurs while the butyrate is attached to the ACP of dmxL2, but this unusual fungal metabolite could then be esterified to O-5 by the O-acetyltransferase dmxR13. Finally, dimerization performed by dmxR5 gives the observed dimers cryptosporioptides A, B and C as the final products of the pathway. The sequence is that of Cytochrome P450 monooxygenase dmxR5 from Cryptosporiopsis sp. (strain 8999).